A 161-amino-acid chain; its full sequence is Nucleotide-binding protein swp_1151 (161 aa).

Belongs to the YajQ family.

Its function is as follows. Nucleotide-binding protein. The polypeptide is Nucleotide-binding protein swp_1151 (Shewanella piezotolerans (strain WP3 / JCM 13877)).